Consider the following 264-residue polypeptide: Small ribosomal subunit protein eS1 (264 aa).

The span at 236–255 (GEGGSGKRGEAGDKSERPEG) shows a compositional bias: basic and acidic residues. A disordered region spans residues 236 to 264 (GEGGSGKRGEAGDKSERPEGYEPPVQESV).

This sequence belongs to the eukaryotic ribosomal protein eS1 family. Component of the small ribosomal subunit. Mature ribosomes consist of a small (40S) and a large (60S) subunit. The 40S subunit contains about 33 different proteins and 1 molecule of RNA (18S). The 60S subunit contains about 49 different proteins and 3 molecules of RNA (28S, 5.8S and 5S).

Its subcellular location is the cytoplasm. This chain is Small ribosomal subunit protein eS1, found in Spodoptera frugiperda (Fall armyworm).